The following is a 556-amino-acid chain: 2-methylpropanoate--CoA ligase CCL4 (556 aa).

Residues 192-200 (TSGTTSSPK), 325-330 (HGYGLT), aspartate 423, 435-438 (IKDR), and lysine 531 contribute to the ATP site. Residues 260–325 (DSEIIYDMIK…TESLGFAVSH (66 aa)) form an SBD1 region. Positions 326 to 402 (GYGLTETAGL…LRGGSVMLGY (77 aa)) are SBD2.

It belongs to the ATP-dependent AMP-binding enzyme family. As to expression, mostly expressed in old leaves and in cones and glandular trichomes (lupulin glands) after flowering, and, to a lower extent, in stems, young leaves and flowers.

The protein resides in the cytoplasm. Its subcellular location is the cytosol. The catalysed reaction is 2-methylpropanoate + ATP + CoA = 2-methylpropanoyl-CoA + AMP + diphosphate. It carries out the reaction propanoate + ATP + CoA = propanoyl-CoA + AMP + diphosphate. The enzyme catalyses butanoate + ATP + CoA = butanoyl-CoA + AMP + diphosphate. It catalyses the reaction 2-methylbutanoate + ATP + CoA = 2-methylbutanoyl-CoA + AMP + diphosphate. The protein operates within secondary metabolite biosynthesis. In terms of biological role, involved in the biosynthesis of prenylated phenolics natural products which contribute to the bitter taste of beer and display broad biological activities. Catalyzes the ligation of CoA on 2-methylpropanoate (isobutyric acid) and 2-methylbutanoate to produce 2-methylpropanoyl-CoA and 2-methylbutanoyl-CoA, respectively. Can also use propanoate and butanoate as substrates with a lower efficiency. This Humulus lupulus (European hop) protein is 2-methylpropanoate--CoA ligase CCL4.